Consider the following 209-residue polypeptide: Uracil phosphoribosyltransferase (209 aa).

5-phospho-alpha-D-ribose 1-diphosphate is bound by residues arginine 79, arginine 104, and 131–139 (DPMLATGGS). Uracil contacts are provided by residues isoleucine 194 and 199 to 201 (GDA). Aspartate 200 is a 5-phospho-alpha-D-ribose 1-diphosphate binding site.

This sequence belongs to the UPRTase family. It depends on Mg(2+) as a cofactor.

The enzyme catalyses UMP + diphosphate = 5-phospho-alpha-D-ribose 1-diphosphate + uracil. It participates in pyrimidine metabolism; UMP biosynthesis via salvage pathway; UMP from uracil: step 1/1. Its activity is regulated as follows. Allosterically activated by GTP. Functionally, catalyzes the conversion of uracil and 5-phospho-alpha-D-ribose 1-diphosphate (PRPP) to UMP and diphosphate. The sequence is that of Uracil phosphoribosyltransferase from Lachnoclostridium phytofermentans (strain ATCC 700394 / DSM 18823 / ISDg) (Clostridium phytofermentans).